The sequence spans 585 residues: Cytochrome P450 monooxygenase AOL_s00215g278 (585 aa).

Cysteine 518 contacts heme.

The protein belongs to the cytochrome P450 family. Heme is required as a cofactor.

The protein operates within secondary metabolite biosynthesis; terpenoid biosynthesis. Its function is as follows. Cytochrome P450 monooxygenase; part of the gene cluster that mediates the biosynthesis of sesquiterpenyl epoxy-cyclohexenoids (SECs) such as anthrobotrisins and arthrosporols, metabolites that possess a novel hybrid carbon skeleton consisting of a polyketide-derived epoxycyclohexenol combined with a terpenoid-derived monocyclic sesquiterpenol substructure (PKS-PTS hybrid). The SEC pathway plays an important role for fungal soil colonization via decreasing fungal nematode-capturing ability. Within the pathway, the cytochrome P450 monooxygenase AOL_s00215g278 plays a role in the oxygenation of the phenol moiety, most likely in the epoxy formation. The pathway begins with the biosynthesis of 6-methylsalicylic acid (6-MSA), the first precursor of the polyketide-derived epoxycyclohexenol in arthrosporols, by the polyketide synthase (PKS) AOL_s00215g283 via condensation of 1 acetate and 3 malonate units. The 6-methylsalicylic acid decarboxylase AOL_s00215g281 then catalyzes the decarboxylation of 6-methylsalicylic acid to yield m-cresol. The cytochrome P450 monooxygenase AOL_s00215g282 further oxidizes m-cresol to yield toluquinol. With the assistance of the oxidoreductase AOL_s00215g277, the polyprenyl transferase AOL_s00215g276 catalyzes the farnesylation of toluquinol to produce farnesyl hydroquinone, the hybrid precursor for biosynthesis of SECs. Farnesyl hydroquinone undergoes epoxidation and then subsequent dehydrogenation to form farnesyl epoxy-quinone, the first and simplest SEC. The cytochrome P450 monooxygenase AOL_s00215g278 and the FAD-dependent monooxygenase AOL_s00215g279 might be involved in the oxygenation of the phenol moiety, most likely in the epoxy formation. The cytochrome P450 monooxygenases AOL_s00215g274 and AOL_s00215g280 are involved in specific regional ketone reductions at respectively C-4 and C-1 of farnesyl epoxy-quinone PubMed:33823587. The chain is Cytochrome P450 monooxygenase AOL_s00215g278 from Arthrobotrys oligospora (strain ATCC 24927 / CBS 115.81 / DSM 1491) (Nematode-trapping fungus).